Consider the following 624-residue polypeptide: Dihydroxy-acid dehydratase (624 aa).

A Mg(2+)-binding site is contributed by D81. C122 lines the [2Fe-2S] cluster pocket. Residues D123 and K124 each coordinate Mg(2+). At K124 the chain carries N6-carboxylysine. C195 serves as a coordination point for [2Fe-2S] cluster. Mg(2+) is bound at residue E499. Catalysis depends on S525, which acts as the Proton acceptor.

The protein belongs to the IlvD/Edd family. As to quaternary structure, homodimer. Requires [2Fe-2S] cluster as cofactor. Mg(2+) is required as a cofactor.

The enzyme catalyses (2R)-2,3-dihydroxy-3-methylbutanoate = 3-methyl-2-oxobutanoate + H2O. It catalyses the reaction (2R,3R)-2,3-dihydroxy-3-methylpentanoate = (S)-3-methyl-2-oxopentanoate + H2O. It functions in the pathway amino-acid biosynthesis; L-isoleucine biosynthesis; L-isoleucine from 2-oxobutanoate: step 3/4. It participates in amino-acid biosynthesis; L-valine biosynthesis; L-valine from pyruvate: step 3/4. In terms of biological role, functions in the biosynthesis of branched-chain amino acids. Catalyzes the dehydration of (2R,3R)-2,3-dihydroxy-3-methylpentanoate (2,3-dihydroxy-3-methylvalerate) into 2-oxo-3-methylpentanoate (2-oxo-3-methylvalerate) and of (2R)-2,3-dihydroxy-3-methylbutanoate (2,3-dihydroxyisovalerate) into 2-oxo-3-methylbutanoate (2-oxoisovalerate), the penultimate precursor to L-isoleucine and L-valine, respectively. This chain is Dihydroxy-acid dehydratase, found in Shewanella baltica (strain OS155 / ATCC BAA-1091).